A 146-amino-acid chain; its full sequence is Acidic phospholipase A2 S14-72F (146 aa).

The first 19 residues, 1–19, serve as a signal peptide directing secretion; the sequence is MYPAHLLVLLAVCVSLLGA. The propeptide occupies 20–27; that stretch reads ASIPPQPL. 7 disulfides stabilise this stretch: Cys-38/Cys-98, Cys-54/Cys-145, Cys-56/Cys-72, Cys-71/Cys-126, Cys-78/Cys-119, Cys-87/Cys-112, and Cys-105/Cys-117. Tyr-55, Gly-57, and Gly-59 together coordinate Ca(2+). Residue His-75 is part of the active site. Asp-76 serves as a coordination point for Ca(2+). The active site involves Asp-120.

It belongs to the phospholipase A2 family. Group I subfamily. D49 sub-subfamily. Ca(2+) serves as cofactor. In terms of tissue distribution, expressed by the venom gland.

Its subcellular location is the secreted. It catalyses the reaction a 1,2-diacyl-sn-glycero-3-phosphocholine + H2O = a 1-acyl-sn-glycero-3-phosphocholine + a fatty acid + H(+). Its function is as follows. Snake venom phospholipase A2 (PLA2) that inhibits collagen-induced platelet aggregation. PLA2 catalyzes the calcium-dependent hydrolysis of the 2-acyl groups in 3-sn-phosphoglycerides. The sequence is that of Acidic phospholipase A2 S14-72F from Austrelaps superbus (Lowland copperhead snake).